Consider the following 271-residue polypeptide: Cartilage-associated protein (271 aa).

Residues 1–15 form the signal peptide; the sequence is MWRTLLAALLATAGA. Asparagine 76 carries N-linked (GlcNAc...) asparagine glycosylation.

This sequence belongs to the leprecan family. In terms of tissue distribution, found in articular chondrocytes. Expressed in a variety of tissues.

The protein resides in the secreted. The protein localises to the extracellular space. It is found in the extracellular matrix. Functionally, necessary for efficient 3-hydroxylation of fibrillar collagen prolyl residues. The chain is Cartilage-associated protein (CRTAP) from Gallus gallus (Chicken).